The primary structure comprises 182 residues: Peptide deformylase (182 aa).

Residues Cys100 and His142 each coordinate Fe cation. The active site involves Glu143. Position 146 (His146) interacts with Fe cation.

It belongs to the polypeptide deformylase family. It depends on Fe(2+) as a cofactor.

The catalysed reaction is N-terminal N-formyl-L-methionyl-[peptide] + H2O = N-terminal L-methionyl-[peptide] + formate. Removes the formyl group from the N-terminal Met of newly synthesized proteins. Requires at least a dipeptide for an efficient rate of reaction. N-terminal L-methionine is a prerequisite for activity but the enzyme has broad specificity at other positions. The chain is Peptide deformylase from Bartonella bacilliformis (strain ATCC 35685 / KC583 / Herrer 020/F12,63).